A 328-amino-acid polypeptide reads, in one-letter code: Putative tyrosine-protein kinase C03B1.5 (328 aa).

Residues 25 to 288 (WSPALKIGSG…ALHASSQTYL (264 aa)) form the Protein kinase domain. Residues 31-39 (IGSGAFGEV) and Lys-62 contribute to the ATP site. Catalysis depends on Asp-155, which acts as the Proton acceptor.

It belongs to the protein kinase superfamily. Tyr protein kinase family.

The catalysed reaction is L-tyrosyl-[protein] + ATP = O-phospho-L-tyrosyl-[protein] + ADP + H(+). The sequence is that of Putative tyrosine-protein kinase C03B1.5 from Caenorhabditis elegans.